A 185-amino-acid polypeptide reads, in one-letter code: Ribosome-recycling factor (185 aa).

It belongs to the RRF family.

The protein resides in the cytoplasm. In terms of biological role, responsible for the release of ribosomes from messenger RNA at the termination of protein biosynthesis. May increase the efficiency of translation by recycling ribosomes from one round of translation to another. The polypeptide is Ribosome-recycling factor (Kineococcus radiotolerans (strain ATCC BAA-149 / DSM 14245 / SRS30216)).